A 108-amino-acid polypeptide reads, in one-letter code: uncharacterized protein (108 aa).

3 helical membrane passes run 4–24 (IIFL…FFSM), 46–66 (GMMV…IFIG), and 81–101 (IMAI…WFVL).

The protein resides in the cell membrane. This is an uncharacterized protein from Escherichia coli O157:H7.